Here is a 285-residue protein sequence, read N- to C-terminus: Avenin-like b2 (285 aa).

The signal sequence occupies residues 1–18; it reads MKVFILALLALTATTAIA.

This sequence belongs to the prolamin family. Contains disulfide bonds.

Its function is as follows. Seed storage protein. Might be integrated via inter-chain disulfide bonds within the glutenin polymer. This chain is Avenin-like b2, found in Triticum aestivum (Wheat).